Reading from the N-terminus, the 576-residue chain is Arginine--tRNA ligase (576 aa).

The 'HIGH' region signature appears at 126–136 (ANPTGPMHIGH).

It belongs to the class-I aminoacyl-tRNA synthetase family. Monomer.

It localises to the cytoplasm. It catalyses the reaction tRNA(Arg) + L-arginine + ATP = L-arginyl-tRNA(Arg) + AMP + diphosphate. In Rickettsia akari (strain Hartford), this protein is Arginine--tRNA ligase.